The chain runs to 77 residues: MIYKVFYQETKERSPRRETTRALYLDIDTSSELEGRITARQLVEENRPEYNIEYIELLSDKLLDYEKETGAFEITEF.

The protein belongs to the RNA polymerase subunit epsilon family. As to quaternary structure, RNAP is composed of a core of 2 alpha, a beta and a beta' subunit. The core is associated with a delta subunit, and at least one of epsilon or omega. When a sigma factor is associated with the core the holoenzyme is formed, which can initiate transcription.

It catalyses the reaction RNA(n) + a ribonucleoside 5'-triphosphate = RNA(n+1) + diphosphate. In terms of biological role, a non-essential component of RNA polymerase (RNAP). This chain is DNA-directed RNA polymerase subunit epsilon, found in Streptococcus pneumoniae (strain Hungary19A-6).